We begin with the raw amino-acid sequence, 425 residues long: Serine hydroxymethyltransferase (425 aa).

Residues L128 and 132 to 134 (GHL) contribute to the (6S)-5,6,7,8-tetrahydrofolate site. K237 is modified (N6-(pyridoxal phosphate)lysine).

It belongs to the SHMT family. In terms of assembly, homodimer. It depends on pyridoxal 5'-phosphate as a cofactor.

It localises to the cytoplasm. The enzyme catalyses (6R)-5,10-methylene-5,6,7,8-tetrahydrofolate + glycine + H2O = (6S)-5,6,7,8-tetrahydrofolate + L-serine. It functions in the pathway one-carbon metabolism; tetrahydrofolate interconversion. Its pathway is amino-acid biosynthesis; glycine biosynthesis; glycine from L-serine: step 1/1. Functionally, catalyzes the reversible interconversion of serine and glycine with tetrahydrofolate (THF) serving as the one-carbon carrier. This reaction serves as the major source of one-carbon groups required for the biosynthesis of purines, thymidylate, methionine, and other important biomolecules. Also exhibits THF-independent aldolase activity toward beta-hydroxyamino acids, producing glycine and aldehydes, via a retro-aldol mechanism. The protein is Serine hydroxymethyltransferase of Wolbachia pipientis wMel.